Here is a 254-residue protein sequence, read N- to C-terminus: 5'-nucleotidase SurE (254 aa).

Positions 8, 9, 40, and 93 each coordinate a divalent metal cation.

Belongs to the SurE nucleotidase family. A divalent metal cation is required as a cofactor.

Its subcellular location is the cytoplasm. It carries out the reaction a ribonucleoside 5'-phosphate + H2O = a ribonucleoside + phosphate. Nucleotidase that shows phosphatase activity on nucleoside 5'-monophosphates. This Methylobacterium radiotolerans (strain ATCC 27329 / DSM 1819 / JCM 2831 / NBRC 15690 / NCIMB 10815 / 0-1) protein is 5'-nucleotidase SurE.